A 111-amino-acid polypeptide reads, in one-letter code: Cell cycle protein GpsB (111 aa).

Residues 38–72 (IKDYEAFHKEFDQLKQQNARLKRELEEQKVAATQV) adopt a coiled-coil conformation.

It belongs to the GpsB family. Forms polymers through the coiled coil domains. Interacts with PBP1, MreC and EzrA.

It is found in the cytoplasm. Divisome component that associates with the complex late in its assembly, after the Z-ring is formed, and is dependent on DivIC and PBP2B for its recruitment to the divisome. Together with EzrA, is a key component of the system that regulates PBP1 localization during cell cycle progression. Its main role could be the removal of PBP1 from the cell pole after pole maturation is completed. Also contributes to the recruitment of PBP1 to the division complex. Not essential for septum formation. This is Cell cycle protein GpsB from Bacillus mycoides (strain KBAB4) (Bacillus weihenstephanensis).